Here is a 340-residue protein sequence, read N- to C-terminus: Ras association domain-containing protein 1 (340 aa).

Ser-2 is subject to N-acetylserine. Phosphoserine is present on Ser-2. The mediates interaction with E4F1 stretch occupies residues 2-115 (SAEPELIELR…DLGWDSALER (114 aa)). Residues 51 to 101 (GHRFQPAGPTTHTWCDLCGDFIWGVVRKGLQCAHCKFTCHYRCRALVCLDC) form a Phorbol-ester/DAG-type zinc finger. Residues 175 to 185 (SVPSSKKPPSL) are compositionally biased toward low complexity. A disordered region spans residues 175–196 (SVPSSKKPPSLQDARRGTGRST). Residues 194–288 (RSTAVKRRTS…LSFVLKENDS (95 aa)) enclose the Ras-associating domain. Residues 290–337 (EVNWDAFSMPELHNFLRILQREEEEHLRQILQKYSRCRQKIQEALHAC) enclose the SARAH domain. The MOAP1-binding stretch occupies residues 311–314 (EEEE).

In terms of assembly, interacts with MAP1S and XPA. Binds to the N-terminal of CDC20 during prometaphase. Binds to STK3/MST2 and STK4/MST1. Recruited to the TNFRSF1A and TNFRSF10A complexes in response to their respective cognate ligand, after internalization. Can self-associate. Part of a complex with MDM2, DAXX, RASSF1 and USP7. As to quaternary structure, interacts with MOAP1 and E4F1. Interacts with RSSF5 and probably associates with HRAS via a RSSF1 isoform A-RSSF5 heterodimer. Interacts (via C-terminus) with DAXX (via N-terminus); the interaction is independent of MDM2 and TP53. Interacts (via N-terminus) with MDM2 (via C-terminus); the interaction is independent of TP53. Interacts with RAB39A. Interacts with RAB39B; the interaction is weak. Interacts with ECM2. Interacts with RAB39B; the interaction is strong. Does not interact with RAB39A.

Its subcellular location is the cytoplasm. The protein localises to the cytoskeleton. The protein resides in the microtubule organizing center. It is found in the centrosome. It localises to the spindle. Its subcellular location is the spindle pole. The protein localises to the nucleus. Its function is as follows. Potential tumor suppressor. Required for death receptor-dependent apoptosis. Mediates activation of Mediates activation of STK3/MST2 and STK4/MST1 during Fas-induced apoptosis by preventing their dephosphorylation. When associated with MOAP1, promotes BAX conformational change and translocation to mitochondrial membranes in response to TNF and TNFSF10 stimulation. Isoform A interacts with CDC20, an activator of the anaphase-promoting complex, APC, resulting in the inhibition of APC activity and mitotic progression. Inhibits proliferation by negatively regulating cell cycle progression at the level of G1/S-phase transition by regulating accumulation of cyclin D1 protein. Isoform C has been shown not to perform these roles, no function has been identified for this isoform. Isoform A disrupts interactions among MDM2, DAXX and USP7, thus contributing to the efficient activation of TP53 by promoting MDM2 self-ubiquitination in cell-cycle checkpoint control in response to DNA damage. The chain is Ras association domain-containing protein 1 from Mus musculus (Mouse).